Consider the following 444-residue polypeptide: Glutamyl-tRNA reductase (444 aa).

Substrate-binding positions include 49 to 52 (TCNR), serine 109, 114 to 116 (ETQ), and glutamine 120. The active-site Nucleophile is cysteine 50. An NADP(+)-binding site is contributed by 189-194 (GAGKMG).

It belongs to the glutamyl-tRNA reductase family. As to quaternary structure, homodimer.

It carries out the reaction (S)-4-amino-5-oxopentanoate + tRNA(Glu) + NADP(+) = L-glutamyl-tRNA(Glu) + NADPH + H(+). The protein operates within porphyrin-containing compound metabolism; protoporphyrin-IX biosynthesis; 5-aminolevulinate from L-glutamyl-tRNA(Glu): step 1/2. Functionally, catalyzes the NADPH-dependent reduction of glutamyl-tRNA(Glu) to glutamate 1-semialdehyde (GSA). The protein is Glutamyl-tRNA reductase of Bacillus cereus (strain ATCC 10987 / NRS 248).